A 570-amino-acid chain; its full sequence is MQELKGIGASAGIAIAKAYRLEEPDLTVEKKNISDSEAEVSRFDEAIARSKEELEKIKEHALKELGQDKADIFSAHLLVLSDPELLNPVKEKISTDSVNAEFALKETSSMFVTMFESMDNEYMKERAADIRDVTKRVTGHLLGVEIPNPSMISEEVIIVAEDLTPSDTAQLNREFVKGFTTDIGGRTSHSAIMARSLEIPAVVGTKAATGTIQNGVTVIVDGINGDVIIDPSAETVKEYEEKHNAYLAQKAEWAKLVNEPTVSKDGHHVELAANIGTPDDVKGVLENGGEAVGLYRTEFLYMGRDQLPTEDEQFDAYKTVLERMEGKSVVVRTLDIGGDKELPYLQLPKEMNPFLGYRAIRLCLEEQEIFRTQLRALLRASTYGNLKIMFPMIATVNEFKEAKAILLEEKEKLVKAGQAVSDDIEVGMMVEIPSTAVIADQFAKEVDFFSIGTNDLIQYTMAADRMNERVSYLYQPYNPAILRLITLVIEAAHKEGKWVGMCGEMAGDEIAIPILLGLGLDEFSMSATSILPARTQISKLSKQEAESFKEKILSMSTTEEVVAFVKETFK.

Histidine 189 acts as the Tele-phosphohistidine intermediate in catalysis. Phosphoenolpyruvate contacts are provided by arginine 296 and arginine 332. Mg(2+) is bound by residues glutamate 431 and aspartate 455. Residues 454–455 (ND) and arginine 465 each bind phosphoenolpyruvate. Cysteine 502 functions as the Proton donor in the catalytic mechanism.

The protein belongs to the PEP-utilizing enzyme family. As to quaternary structure, homodimer. Interacts with FloT. Mg(2+) is required as a cofactor.

It is found in the cytoplasm. The protein resides in the membrane raft. The enzyme catalyses L-histidyl-[protein] + phosphoenolpyruvate = N(pros)-phospho-L-histidyl-[protein] + pyruvate. General (non sugar-specific) component of the phosphoenolpyruvate-dependent sugar phosphotransferase system (sugar PTS). This major carbohydrate active-transport system catalyzes the phosphorylation of incoming sugar substrates concomitantly with their translocation across the cell membrane. Enzyme I transfers the phosphoryl group from phosphoenolpyruvate (PEP) to the phosphoryl carrier protein (HPr). This is Phosphoenolpyruvate-protein phosphotransferase (ptsI) from Bacillus subtilis (strain 168).